The chain runs to 204 residues: Acyl-homoserine-lactone synthase (204 aa).

Belongs to the autoinducer synthase family.

It catalyses the reaction a fatty acyl-[ACP] + S-adenosyl-L-methionine = an N-acyl-L-homoserine lactone + S-methyl-5'-thioadenosine + holo-[ACP] + H(+). Functionally, required for the synthesis of acyl-HSL autoinducers that bind to SolR. This chain is Acyl-homoserine-lactone synthase (solI), found in Ralstonia nicotianae (strain ATCC BAA-1114 / GMI1000) (Ralstonia solanacearum).